The chain runs to 816 residues: MGDTVVAPAPLKPASESTPGPPGNNGGSLLSVITEGVGELSVIDPEVAQKACQEVLQKVKLSHGGVASSDRGTPLELVNGDGVDGEIRCLDDPPTGIREEDDETEATVASGTAKGARRRRQNNSAKQSWLLRLFESKLFDISMAISYLYNSKEPGVQAYIGNRLFCFRNEDVDFYLPQLLNMYVHMDEDVGDAIKPYIVHRCRQSVDFSLQCALLLGAYSSDMHISTQRHSRGTKLRRLILSDELKPAHRKRELPSLSPAPDTGLSPSKRTHQRSKSDATASISLSSSLKRTASNPKVESEDEELSSSTESIDNSFSSPVRLAPEREFIKSLMAIGKRLATLPTKEQKTQRLISELSLLNHKLPARVWLPTAGFDHHVVRVPHTQAVVLNSKDKAPYLIYVEVLECENFDTTSVPARIPENRIRSTRSVENLPECGISHEQRAGSFSTVPNYDNDDEAWSVDDIGELQVELPEMHTNSCDNISQFSVDSITSQESKEPVFIAAGDIRRRLSEQLAHTPTAFKRDPEDPSAVALKEPWQEKVRRIREGSPYGHLPNWRLLSVIVKCGDDLRQELLAFQVLKQLQSIWEQERVPLWIKPYKILVISADSGMIEPVVNAVSIHQVKKQSQLSLLDYFLQEHGSYTTEAFLSAQRNFVQSCAGYCLVCYLLQVKDRHNGNILLDAEGHIIHIDFGFILSSSPRNLGFETSAFKLTTEFVDVMGGLDGDMFNYYKMLMLQGLIAARKHMDKVVQIVEIMQQGSQLPCFHGSSTIRNLKERFHMSMTEEQLQLLVEQMVDGSMRSITTKLYDGFQYLTNGIM.

Disordered stretches follow at residues 1–28 (MGDTVVAPAPLKPASESTPGPPGNNGGS), 93–120 (PPTGIREEDDETEATVASGTAKGARRRR), and 249–318 (HRKR…SFSS). G2 is modified (N-acetylglycine). The interaction with ACBD3 stretch occupies residues 2–68 (GDTVVAPAPL…VKLSHGGVAS (67 aa)). The PIK helical domain occupies 49–242 (QKACQEVLQK…GTKLRRLILS (194 aa)). Position 258 is a phosphoserine (S258). T263 carries the post-translational modification Phosphothreonine. Residues S266, S275, S277, S284, S294, S428, and S511 each carry the phosphoserine modification. The segment covering 278–294 (DATASISLSSSLKRTAS) has biased composition (low complexity). 2 positions are modified to phosphothreonine: T517 and T519. Positions 535–801 (EPWQEKVRRI…MVDGSMRSIT (267 aa)) constitute a PI3K/PI4K catalytic domain. Residues 541 to 547 (VRRIREG) are G-loop. The tract at residues 668–676 (QVKDRHNGN) is catalytic loop. The tract at residues 687 to 711 (HIDFGFILSSSPRNLGFETSAFKLT) is activation loop.

It belongs to the PI3/PI4-kinase family. Type III PI4K subfamily. Interacts with ARF1 and ARF3 in the Golgi complex, but not with ARF4, ARF5 or ARF6. Interacts with NCS1/FREQ in a calcium-independent manner. Interacts with CALN1/CABP8 and CALN2/CABP7; in a calcium-dependent manner; this interaction competes with NCS1/FREQ binding. Interacts with ACBD3. Interacts with ARMH3, YWHAB, YWHAE, YWHAG, YWHAH, YWHAQ, YWHAZ and SFN. Interacts with GGA2 (via VHS domain); the interaction is important for PI4KB location at the Golgi apparatus membrane. Interacts with ATG9A. Mg(2+) serves as cofactor. Mn(2+) is required as a cofactor.

It is found in the endomembrane system. The protein localises to the mitochondrion outer membrane. The protein resides in the rough endoplasmic reticulum membrane. Its subcellular location is the golgi apparatus. It localises to the golgi apparatus membrane. It catalyses the reaction a 1,2-diacyl-sn-glycero-3-phospho-(1D-myo-inositol) + ATP = a 1,2-diacyl-sn-glycero-3-phospho-(1D-myo-inositol 4-phosphate) + ADP + H(+). Inhibited by wortmannin. Increased kinase activity upon interaction with NCS1/FREQ. In terms of biological role, phosphorylates phosphatidylinositol (PI) in the first committed step in the production of the second messenger inositol-1,4,5,-trisphosphate (PIP). May regulate Golgi disintegration/reorganization during mitosis, possibly via its phosphorylation. Involved in Golgi-to-plasma membrane trafficking. May play an important role in the inner ear development. This chain is Phosphatidylinositol 4-kinase beta (PI4KB), found in Rhinolophus ferrumequinum (Greater horseshoe bat).